We begin with the raw amino-acid sequence, 107 residues long: Polyketide synthase CurG (107 aa).

It functions in the pathway antibiotic biosynthesis; curamycin biosynthesis. This is Polyketide synthase CurG (curG) from Streptomyces cyaneus (Streptomyces curacoi).